Reading from the N-terminus, the 288-residue chain is GDSL esterase/lipase At3g43550 (288 aa).

The signal sequence occupies residues 1–19; the sequence is MKLQIIWLALVLIAVETYA. A glycan (N-linked (GlcNAc...) asparagine) is linked at N25. S37 acts as the Nucleophile in catalysis.

Belongs to the 'GDSL' lipolytic enzyme family.

The protein localises to the secreted. This Arabidopsis thaliana (Mouse-ear cress) protein is GDSL esterase/lipase At3g43550.